Here is a 75-residue protein sequence, read N- to C-terminus: UPF0352 protein YejL (75 aa).

Belongs to the UPF0352 family.

This chain is UPF0352 protein YejL, found in Escherichia coli O127:H6 (strain E2348/69 / EPEC).